We begin with the raw amino-acid sequence, 971 residues long: MAPTRKSKSVNKRFTNEASPDINFGSASKTKQRKKKLADKLGPQWTKRELVRFYDAYRKYVGDWKKVAAAVRNNRSVEMVETLFCMNRAYLSLPEGTASVAGLIAMMTDHYSVMEGSESEGEDHDASEVTRKHLKRKRPQVLPSDFREEVVPPHSVASVEGCLSFLKQTQAYEKRQRATGKRTPRFLVAITHERDDIEDFSPPNKRAKKQLDADDDASRRGGGSPYRRKELSEITPTRLRKTSQAQEAQFKHPDSSMFENGVRDRWHKKGAADRDGALLMDMEGLVTQKEKIVRVEEAEGNYSDDDDGLGALKTLAEMSASLAPAGLLESESSPHWEEERKTNNVDKKSNTLETVSTSHHREKAKQAGLEDNLLHAISAPDKRKPKSVPESVDGNVVSIEELRTSSRKRKPKFQVLDVVAPKESTQDKSLYTKESAEVDSLKTPVKARRSSQGPAKQLKTAKTTVESSSASDKKITGPDAVVPATQVSASGPETLPQKPPNRRKISLKKSLQERAKSLETTHDKPRSFKKLSEHELLQEKLSNCLSYPLVRRWCIYEWFYSAIDYPWFAKMEFTDYLNHVGLGHAPRLTRVEWSVIKSSLGRPRRLSQRFLQDERDKLQEYRESVRKHYTELRGCATGVLHTDLARPLSVGNRVIAIHPKTREIRDGKILTVDHNKCNVLFDELGVELVMDIDCMPLNPLEYMPEGLRRQIDKCLAICKEARLNRHPSSDASVLFSPSVLENVNFSMNPPPAKQDDIREPVLYGKVIATNTTDQSIVINSKVTGTEIQRTLALQHTSDAQEMEPEMIEIVIESKSIAQAMVDAAIKAASSGKNNEDSENMVHQALSSIGEHQPLDNSIVPGIKHQEYTNGSLDHHSLNTAEPMSNGFISQEGSGKNKTPMPSELITSCVASWLMMQMISKKQYPPADVAQLMDTVVNDLQPRCPQNMPIYREIQTCMGLIKTQIMALVRTS.

Positions 1–11 (MAPTRKSKSVN) are enriched in basic residues. Disordered stretches follow at residues 1–40 (MAPTRKSKSVNKRFTNEASPDINFGSASKTKQRKKKLADK), 117–137 (SESEGEDHDASEVTRKHLKRK), 197–260 (IEDF…MFEN), 326–371 (GLLE…GLED), and 421–507 (PKES…KISL). The SANT domain occupies 40–98 (KLGPQWTKRELVRFYDAYRKYVGDWKKVAAAVRNNRSVEMVETLFCMNRAYLSLPEGTA). Composition is skewed to basic and acidic residues over residues 209–219 (KQLDADDDASR), 332–350 (SSPHWEEERKTNNVDKKSN), and 424–440 (STQDKSLYTKESAEVDS). The span at 450-470 (SSQGPAKQLKTAKTTVESSSA) shows a compositional bias: polar residues.

As to expression, expressed ubiquitously in vegetative and reproductive tissues.

The protein resides in the nucleus. The sequence is that of Protein ALWAYS EARLY 1 (ALY1) from Arabidopsis thaliana (Mouse-ear cress).